A 112-amino-acid polypeptide reads, in one-letter code: Large ribosomal subunit protein P2 (112 aa).

Positions 81–112 are disordered; sequence VETAEAKKEDKKEEKKEEEEEEEDDLGFSLFG. The span at 84 to 95 shows a compositional bias: basic and acidic residues; sequence AEAKKEDKKEEK. Residues 96 to 106 are compositionally biased toward acidic residues; it reads KEEEEEEEDDL.

This sequence belongs to the eukaryotic ribosomal protein P1/P2 family. In terms of assembly, P1 and P2 exist as dimers at the large ribosomal subunit. Phosphorylated.

Plays an important role in the elongation step of protein synthesis. This is Large ribosomal subunit protein P2 (MAL3P3.19) from Plasmodium falciparum (isolate 3D7).